The following is a 197-amino-acid chain: Tic20 family protein Ycf60 (197 aa).

A run of 5 helical transmembrane segments spans residues 3–23 (IIIA…GVGV), 47–66 (FGYY…PDVL), 81–101 (LVVV…MSYF), 118–138 (VSQA…LNAL), and 141–161 (MILM…LTMG).

This sequence belongs to the Tic20 family.

The protein resides in the plastid. The protein localises to the chloroplast membrane. In Cyanidioschyzon merolae (strain NIES-3377 / 10D) (Unicellular red alga), this protein is Tic20 family protein Ycf60 (ycf60).